A 380-amino-acid chain; its full sequence is Tryptophan 2,3-dioxygenase (380 aa).

Substrate is bound by residues Phe-57–His-61 and Arg-128. Heme is bound at residue His-313. Thr-328 serves as a coordination point for substrate.

Belongs to the tryptophan 2,3-dioxygenase family. As to quaternary structure, homotetramer. Dimer of dimers. Requires heme as cofactor.

It catalyses the reaction L-tryptophan + O2 = N-formyl-L-kynurenine. The protein operates within amino-acid degradation; L-tryptophan degradation via kynurenine pathway; L-kynurenine from L-tryptophan: step 1/2. Its pathway is pigment biosynthesis; ommochrome biosynthesis. Its function is as follows. Heme-dependent dioxygenase that catalyzes the oxidative cleavage of the L-tryptophan (L-Trp) pyrrole ring and converts L-tryptophan to N-formyl-L-kynurenine. Catalyzes the oxidative cleavage of the indole moiety. In Drosophila mojavensis (Fruit fly), this protein is Tryptophan 2,3-dioxygenase.